A 229-amino-acid chain; its full sequence is Translation initiation factor 6 (229 aa).

The protein belongs to the eIF-6 family.

In terms of biological role, binds to the 50S ribosomal subunit and prevents its association with the 30S ribosomal subunit to form the 70S initiation complex. This is Translation initiation factor 6 from Thermococcus kodakarensis (strain ATCC BAA-918 / JCM 12380 / KOD1) (Pyrococcus kodakaraensis (strain KOD1)).